Consider the following 150-residue polypeptide: Large ribosomal subunit protein bL9 (150 aa).

The protein belongs to the bacterial ribosomal protein bL9 family.

Binds to the 23S rRNA. In Vibrio parahaemolyticus serotype O3:K6 (strain RIMD 2210633), this protein is Large ribosomal subunit protein bL9.